The primary structure comprises 244 residues: Glucosamine-6-phosphate deaminase (244 aa).

Aspartate 67 serves as the catalytic Proton acceptor; for enolization step. The active-site For ring-opening step is the asparagine 136. Histidine 138 functions as the Proton acceptor; for ring-opening step in the catalytic mechanism. Glutamate 143 acts as the For ring-opening step in catalysis.

It belongs to the glucosamine/galactosamine-6-phosphate isomerase family. NagB subfamily.

It carries out the reaction alpha-D-glucosamine 6-phosphate + H2O = beta-D-fructose 6-phosphate + NH4(+). It functions in the pathway amino-sugar metabolism; N-acetylneuraminate degradation; D-fructose 6-phosphate from N-acetylneuraminate: step 5/5. Catalyzes the reversible isomerization-deamination of glucosamine 6-phosphate (GlcN6P) to form fructose 6-phosphate (Fru6P) and ammonium ion. In Clostridium botulinum (strain ATCC 19397 / Type A), this protein is Glucosamine-6-phosphate deaminase.